The sequence spans 230 residues: Heptaprenylglyceryl phosphate synthase (230 aa).

A sn-glycerol 1-phosphate-binding site is contributed by Lys12. The Mg(2+) site is built by Asp14 and Ser40. Sn-glycerol 1-phosphate-binding positions include 159-164 (YLEYSG), Gly189, and 209-210 (GN).

The protein belongs to the GGGP/HepGP synthase family. Group I subfamily. Homodimer. Mg(2+) serves as cofactor.

The catalysed reaction is sn-glycerol 1-phosphate + all-trans-heptaprenyl diphosphate = 3-heptaprenyl-sn-glycero-1-phosphate + diphosphate. It participates in membrane lipid metabolism; glycerophospholipid metabolism. Prenyltransferase that catalyzes in vivo the transfer of the heptaprenyl moiety of heptaprenyl pyrophosphate (HepPP; 35 carbon atoms) to the C3 hydroxyl of sn-glycerol-1-phosphate (G1P), producing heptaprenylglyceryl phosphate (HepGP). This reaction is an ether-bond-formation step in the biosynthesis of archaea-type G1P-based membrane lipids found in Bacillales. This is Heptaprenylglyceryl phosphate synthase from Bacillus pumilus (strain SAFR-032).